A 217-amino-acid polypeptide reads, in one-letter code: 3,4-dihydroxy-2-butanone 4-phosphate synthase (217 aa).

D-ribulose 5-phosphate contacts are provided by residues 37–38 (RE), D42, 150–154 (RGGHT), and E174. E38 lines the Mg(2+) pocket. H153 contacts Mg(2+).

The protein belongs to the DHBP synthase family. Homodimer. Requires Mg(2+) as cofactor. Mn(2+) serves as cofactor.

The enzyme catalyses D-ribulose 5-phosphate = (2S)-2-hydroxy-3-oxobutyl phosphate + formate + H(+). It functions in the pathway cofactor biosynthesis; riboflavin biosynthesis; 2-hydroxy-3-oxobutyl phosphate from D-ribulose 5-phosphate: step 1/1. Functionally, catalyzes the conversion of D-ribulose 5-phosphate to formate and 3,4-dihydroxy-2-butanone 4-phosphate. In Pectobacterium carotovorum subsp. carotovorum (strain PC1), this protein is 3,4-dihydroxy-2-butanone 4-phosphate synthase.